The primary structure comprises 367 residues: Aflatoxin B1 aldehyde reductase member 2 (367 aa).

A mitochondrion-targeting transit peptide spans 1-46 (MLRAVSRAVSRAAVRCAWRSGPSVARPLAMSRSPAPRAVSGAPLRP). The segment at 27 to 46 (PLAMSRSPAPRAVSGAPLRP) is disordered. Ser40 is subject to Phosphoserine. Thr48 is subject to Phosphothreonine. Asp80 contacts NADP(+). Residue Tyr85 is the Proton donor of the active site. Residue Lys136 is modified to N6-acetyllysine. Position 149 (His149) interacts with substrate. Residues 179–180 (SN), Gln205, 234–244 (NPLAGGLLTGK), and Arg258 each bind NADP(+). At Lys244 the chain carries N6-succinyllysine. Phosphoserine is present on Ser263. Substrate is bound by residues Tyr268 and Arg271. Residue 326–334 (SSLEQLEQN) coordinates NADP(+). Residue Arg367 participates in substrate binding.

The protein belongs to the aldo/keto reductase family. Aldo/keto reductase 2 subfamily. Homodimer. Heterodimer with AKR7A1.

The protein localises to the mitochondrion. The protein resides in the golgi apparatus. It is found in the golgi stack. It localises to the cytoplasm. It catalyses the reaction 4-hydroxybutanoate + NADP(+) = succinate semialdehyde + NADPH + H(+). Catalyzes the NADPH-dependent reduction of succinic semialdehyde to gamma-hydroxybutyrate. May have an important role in producing the neuromodulator gamma-hydroxybutyrate (GHB). Has broad substrate specificity. Can reduce the dialdehyde protein-binding form of aflatoxin B1 (AFB1) to the non-binding AFB1 dialcohol. Acts as a 2-carboxybenzaldehyde reductase. This is Aflatoxin B1 aldehyde reductase member 2 (Akr7a2) from Rattus norvegicus (Rat).